A 406-amino-acid polypeptide reads, in one-letter code: MVSVTHCDSLWFGADIITMRGGNYQLIPQGAIAVTGDKIVWIGPHAELPPIHAARQVVYEGGLITPGLIDCHTHLVFGGDRSNEFEQRLNGVSYAEIAANGGGIISTVRATRQASEQQLLEQALFRLKPLLAEGVTTIEIKSGYGLNLESEIKMLRVARRLGELLPIDVKTTCLAAHALPPEFIGQPDDYIDVVCNSIIPQVAVENLADAVDAFCEHLAFSPAQVERVFLAAQKAGLPVKLHAEQLSALRGATLAAKFHAISADHLEYATESDVQAMAKAGTVAVLLPGAYYLLRETQCPPIDLFRQYKVPMALASDANPGTSPVLSLRLMLNMACTLFRMTPEEALAGVTCHAAQALGVQQTQGTLETGKLANWVHWPLSHPAELAYWLGGQLPATVVFRGEVRP.

Fe(3+) contacts are provided by H72 and H74. Zn(2+)-binding residues include H72 and H74. 4-imidazolone-5-propanoate contacts are provided by R81, Y144, and H177. Y144 provides a ligand contact to N-formimidoyl-L-glutamate. H242 is a Fe(3+) binding site. H242 is a binding site for Zn(2+). Q245 serves as a coordination point for 4-imidazolone-5-propanoate. D317 is a binding site for Fe(3+). D317 is a Zn(2+) binding site. The N-formimidoyl-L-glutamate site is built by N319 and G321. T322 contributes to the 4-imidazolone-5-propanoate binding site.

It belongs to the metallo-dependent hydrolases superfamily. HutI family. The cofactor is Zn(2+). Requires Fe(3+) as cofactor.

The protein localises to the cytoplasm. The enzyme catalyses 4-imidazolone-5-propanoate + H2O = N-formimidoyl-L-glutamate. It participates in amino-acid degradation; L-histidine degradation into L-glutamate; N-formimidoyl-L-glutamate from L-histidine: step 3/3. Its function is as follows. Catalyzes the hydrolytic cleavage of the carbon-nitrogen bond in imidazolone-5-propanoate to yield N-formimidoyl-L-glutamate. It is the third step in the universal histidine degradation pathway. This chain is Imidazolonepropionase, found in Yersinia pseudotuberculosis serotype O:1b (strain IP 31758).